The sequence spans 431 residues: uncharacterized protein (431 aa).

The 258-residue stretch at 1–258 folds into the Peptidase S8 domain; sequence MPSQMREAIT…HGLIDLERAG (258 aa).

Belongs to the peptidase S8 family.

This is an uncharacterized protein from Sinorhizobium fredii (strain NBRC 101917 / NGR234).